Here is a 532-residue protein sequence, read N- to C-terminus: Probable pectinesterase/pectinesterase inhibitor 39 (532 aa).

The first 34 residues, 1–34 (MINNHPIREKPKHIIFNLLSLIFFLIFLSTVVSS), serve as a signal peptide directing secretion. The tract at residues 35–169 (QSPSYTTHKT…ENLKEIILDI (135 aa)) is pectinesterase inhibitor 39. N-linked (GlcNAc...) asparagine glycans are attached at residues N62, N74, N85, N172, N221, N231, N244, and N287. The tract at residues 221 to 518 (NLSVAIDGTG…FTVGPFIDGS (298 aa)) is pectinesterase 39. 2 residues coordinate substrate: T296 and Q326. The active-site Proton donor; for pectinesterase activity is D349. The active-site Nucleophile; for pectinesterase activity is the D370. N-linked (GlcNAc...) asparagine glycans are attached at residues N382 and N404. 2 residues coordinate substrate: R438 and W440. N502 and N522 each carry an N-linked (GlcNAc...) asparagine glycan.

The protein in the N-terminal section; belongs to the PMEI family. In the C-terminal section; belongs to the pectinesterase family. Expressed in siliques but not in flower buds.

It is found in the secreted. Its subcellular location is the cell wall. It catalyses the reaction [(1-&gt;4)-alpha-D-galacturonosyl methyl ester](n) + n H2O = [(1-&gt;4)-alpha-D-galacturonosyl](n) + n methanol + n H(+). It participates in glycan metabolism; pectin degradation; 2-dehydro-3-deoxy-D-gluconate from pectin: step 1/5. Functionally, acts in the modification of cell walls via demethylesterification of cell wall pectin. This Arabidopsis thaliana (Mouse-ear cress) protein is Probable pectinesterase/pectinesterase inhibitor 39 (PME39).